Consider the following 708-residue polypeptide: Matrix metalloproteinase-9 (708 aa).

The N-terminal stretch at 1 to 19 (MSPWQPLLLVLLALGYSFA) is a signal peptide. A propeptide spans 20-107 (APHQRQPTYV…PRCGVPDVGK (88 aa)) (activation peptide). Asn-39 carries N-linked (GlcNAc...) asparagine glycosylation. A Cysteine switch motif is present at residues 98–105 (PRCGVPDV). Residue Cys-100 coordinates Zn(2+). An N-linked (GlcNAc...) asparagine glycan is attached at Asn-121. Ca(2+) is bound by residues Asp-132 and Asp-166. The Zn(2+) site is built by His-176 and Asp-178. 4 residues coordinate Ca(2+): Asp-183, Gly-184, Asp-186, and Leu-188. His-191 contacts Zn(2+). Ca(2+) contacts are provided by Gly-198, Gln-200, and Asp-202. His-204 contacts Zn(2+). Ca(2+) is bound by residues Asp-206, Asp-207, and Glu-209. 3 Fibronectin type-II domains span residues 226 to 274 (ANGA…FCPS), 284 to 332 (GDGK…FCPT), and 343 to 391 (SAGE…FCPD). 6 disulfide bridges follow: Cys-231–Cys-257, Cys-245–Cys-272, Cys-289–Cys-315, Cys-303–Cys-330, Cys-348–Cys-374, and Cys-362–Cys-389. His-402 is a binding site for Zn(2+). Glu-403 is a catalytic residue. Zn(2+) is bound by residues His-406 and His-412. The disordered stretch occupies residues 441 to 520 (HHLYGRGSKP…SSTPDDNPCN (80 aa)). Residues 480 to 490 (PTGGPTVAPTG) show a composition bias toward low complexity. Residues 491-502 (APSPGPTGPPTA) are compositionally biased toward pro residues. An intrachain disulfide couples Cys-519 to Cys-707. Hemopexin repeat units follow at residues 521-566 (VDVF…WPAF), 567-611 (PSKL…GLGS), 613-660 (VTLV…FSGV), and 661-707 (PWNS…LLQC).

It belongs to the peptidase M10A family. In terms of assembly, exists as monomer or homodimer; disulfide-linked. Also exists as heterodimer with LCN2. Macrophages and transformed cell lines produce only the monomeric form. Interacts with ECM1. The cofactor is Zn(2+). Ca(2+) serves as cofactor. In terms of processing, N- and O-glycosylated.

The protein resides in the secreted. It is found in the extracellular space. Its subcellular location is the extracellular matrix. It catalyses the reaction Cleavage of gelatin types I and V and collagen types IV and V.. In terms of biological role, matrix metalloproteinase that plays an essential role in local proteolysis of the extracellular matrix and in leukocyte migration. Could play a role in bone osteoclastic resorption. Cleaves KiSS1 at a Gly-|-Leu bond. Cleaves NINJ1 to generate the Secreted ninjurin-1 form. Cleaves type IV and type V collagen into large C-terminal three quarter fragments and shorter N-terminal one quarter fragments. Degrades fibronectin but not laminin or Pz-peptide. The protein is Matrix metalloproteinase-9 (Mmp9) of Rattus norvegicus (Rat).